The following is a 198-amino-acid chain: Protein UNCMA_24250 (198 aa).

The AMMECR1 domain occupies 5–194 (EDGTLAVKTA…ETEPGGPVIE (190 aa)).

The polypeptide is Protein UNCMA_24250 (Methanocella arvoryzae (strain DSM 22066 / NBRC 105507 / MRE50)).